A 321-amino-acid chain; its full sequence is Probable nucleosome assembly protein (321 aa).

Acidic residues predominate over residues 272-298 (EENDYDFGEDFEDEEGEDDDEEDDEEE). Residues 272-321 (EENDYDFGEDFEDEEGEDDDEEDDEEEQTIKKPSGKGKAQPQQPQDCKQQ) form a disordered region. A compositionally biased stretch (low complexity) spans 311 to 321 (QPQQPQDCKQQ).

Belongs to the nucleosome assembly protein (NAP) family.

It is found in the nucleus. In terms of biological role, may modulate chromatin structure by regulation of histone octamer formation. The chain is Probable nucleosome assembly protein (nap1) from Dictyostelium discoideum (Social amoeba).